The primary structure comprises 209 residues: Chloramphenicol acetyltransferase (209 aa).

The Proton acceptor role is filled by His-189.

The protein belongs to the chloramphenicol acetyltransferase family. Homotrimer.

The catalysed reaction is chloramphenicol + acetyl-CoA = chloramphenicol 3-acetate + CoA. This enzyme is an effector of chloramphenicol resistance in bacteria. The chain is Chloramphenicol acetyltransferase from Staphylococcus aureus.